Here is a 372-residue protein sequence, read N- to C-terminus: Glutamate 5-kinase (372 aa).

K14 contributes to the ATP binding site. Substrate is bound by residues S54, D141, and N153. 173 to 174 (TD) is an ATP binding site. The PUA domain maps to 280–358 (RGNVTLDEGA…DEIESLLGYI (79 aa)).

The protein belongs to the glutamate 5-kinase family.

The protein localises to the cytoplasm. It catalyses the reaction L-glutamate + ATP = L-glutamyl 5-phosphate + ADP. The protein operates within amino-acid biosynthesis; L-proline biosynthesis; L-glutamate 5-semialdehyde from L-glutamate: step 1/2. Functionally, catalyzes the transfer of a phosphate group to glutamate to form L-glutamate 5-phosphate. This Nitrosospira multiformis (strain ATCC 25196 / NCIMB 11849 / C 71) protein is Glutamate 5-kinase.